Consider the following 129-residue polypeptide: Fluoride-specific ion channel FluC (129 aa).

4 helical membrane-spanning segments follow: residues 5–25 (LTIALFCAGGGLARYYLSGWV), 32–52 (AFPFGTLAVNLIGAYCIGLIM), 60–80 (LIPATLRLGLTVGFMGGLTTF), and 99–119 (AMVNALASVVMCLLCTWLGVI). Na(+) contacts are provided by G75 and T78.

This sequence belongs to the fluoride channel Fluc/FEX (TC 1.A.43) family.

The protein resides in the cell inner membrane. The enzyme catalyses fluoride(in) = fluoride(out). Na(+) is not transported, but it plays an essential structural role and its presence is essential for fluoride channel function. Fluoride-specific ion channel. Important for reducing fluoride concentration in the cell, thus reducing its toxicity. The polypeptide is Fluoride-specific ion channel FluC (Pelobacter propionicus (strain DSM 2379 / NBRC 103807 / OttBd1)).